Here is a 391-residue protein sequence, read N- to C-terminus: MTNQPTEIAIVGGGMVGGALALGLAQHGFAVTVIEHAEPAPFVADSQPDVRISAISAASVSLLKGLGVWDAVQAMRCHPYRRLETWEWETAHVVFDAAELKLPLLGYMVENTVLQQALWQALEAHPKVTLRVPGSLIALHRHDDLQELELKGGEVIRAKLVIGADGANSQVRQMAGIGVHAWQYAQSCMLISVQCENDPGDSTWQQFTPDGPRAFLPLFDNWASLVWYDSPARIRQLQNMNMAQLQAEIAKHFPSRLGYVTPLAAGAFPLTRRHALQYVQPGLALVGDAAHTIHPLAGQGVNLGYRDVDALIDVLVNARSYGEAWASYPVLKRYQMRRMADNFIMQSGMDLFYAGFSNNLPPLRFMRNLGLMAAERAGVLKRQALKYALGL.

The protein belongs to the UbiH/COQ6 family. As to quaternary structure, component of the Ubi complex metabolon, which regroups five ubiquinone biosynthesis proteins (UbiE, UbiF, UbiG, UbiH and UbiI) and two accessory factors (UbiK and the lipid-binding protein UbiJ). The cofactor is FAD.

The protein localises to the cytoplasm. The catalysed reaction is a 5-methoxy-2-methyl-3-(all-trans-polyprenyl)benzene-1,4-diol + AH2 + O2 = a 3-demethylubiquinol + A + H2O. The protein operates within cofactor biosynthesis; ubiquinone biosynthesis. In terms of biological role, catalyzes the hydroxylation of 2-octaprenyl-3-methyl-6-methoxy-1,4-benzoquinol during ubiquinone biosynthesis. The chain is 3-demethoxyubiquinol 3-hydroxylase (ubiF) from Escherichia coli (strain K12).